A 200-amino-acid polypeptide reads, in one-letter code: Late protein I196L (200 aa).

2 consecutive repeat copies span residues 28–48 (SNSLTTAISNNTSTTILPTTS) and 49–69 (SNSLMTAIPNNTSTTISPTTS). The stretch at 70-91 (SNYLTSAISTNISDKEEDTPFS) is one 3; approximate repeat.

Belongs to the asfivirus I196L family.

In African swine fever virus (isolate Tick/South Africa/Pretoriuskop Pr4/1996) (ASFV), this protein is Late protein I196L.